The sequence spans 397 residues: GDP-mannose transporter 1 (397 aa).

Residues methionine 1 to serine 57 are disordered. Residues methionine 1 to glutamine 61 lie on the Cytoplasmic side of the membrane. A compositionally biased stretch (polar residues) spans proline 9–serine 19. A compositionally biased stretch (basic and acidic residues) spans aspartate 34 to alanine 54. Residues valine 62–valine 82 traverse the membrane as a helical segment. Topologically, residues valine 83–asparagine 87 are lumenal. Asparagine 87 carries N-linked (GlcNAc...) asparagine glycosylation. Residues phenylalanine 88–threonine 108 form a helical membrane-spanning segment. Over valine 109–aspartate 124 the chain is Cytoplasmic. Residues alanine 125 to glycine 142 form a helical membrane-spanning segment. At serine 143–alanine 145 the chain is on the lumenal side. A helical transmembrane segment spans residues leucine 146–glycine 168. The Cytoplasmic portion of the chain corresponds to glutamate 169–asparagine 174. The helical transmembrane segment at glycine 175–tryptophan 197 threads the bilayer. The Lumenal portion of the chain corresponds to serine 198–glycine 228. A helical membrane pass occupies residues leucine 229–phenylalanine 249. The Cytoplasmic portion of the chain corresponds to methionine 250–serine 272. The helical transmembrane segment at isoleucine 273–leucine 293 threads the bilayer. Over asparagine 294–arginine 300 the chain is Lumenal. Residues valine 301 to threonine 321 traverse the membrane as a helical segment. Over alanine 322–threonine 332 the chain is Cytoplasmic. A helical transmembrane segment spans residues tyrosine 333–glycine 353. Topologically, residues aspartate 354–proline 355 are lumenal. A helical membrane pass occupies residues alanine 356 to valine 376. Residues alanine 377–proline 397 lie on the Cytoplasmic side of the membrane.

This sequence belongs to the TPT transporter family. SLC35D subfamily. Homooligomer.

It is found in the golgi apparatus membrane. The protein localises to the cytoplasmic vesicle membrane. It localises to the endoplasmic reticulum membrane. In terms of biological role, involved in the import of GDP-mannose from the cytoplasm into the Golgi lumen. Involved in capsule synthesis. The sequence is that of GDP-mannose transporter 1 (GMT1) from Cryptococcus neoformans var. neoformans serotype D (strain B-3501A) (Filobasidiella neoformans).